Here is a 597-residue protein sequence, read N- to C-terminus: Phragmoplastin interacting protein 1 (597 aa).

The segment at Glu-18–Asn-136 is disordered. Residues Leu-20–Pro-29 are compositionally biased toward polar residues. A compositionally biased stretch (low complexity) spans Gln-30–Ser-40. Basic residues-rich tracts occupy residues His-43–Arg-53 and Gln-112–Pro-129. The short motif at Gln-112–Lys-119 is the Nuclear localization signal element. 2 RRM domains span residues Asn-161–Lys-238 and Asn-262–Lys-338. CCHC-type zinc fingers lie at residues Cys-397 to Pro-411, Cys-481 to Pro-495, and Cys-576 to Asn-591.

As to quaternary structure, interacts with phragmoplastins (e.g. DRP1A, DRP1B, DRP1C, DRP1D and DRP1E) and with GTP-bound ARAC11/ROP1 as well as with Ran2 transcripts.

The protein resides in the nucleus. It is found in the cell membrane. The protein localises to the cytoplasm. Its subcellular location is the cytoskeleton. It localises to the phragmoplast. In terms of biological role, RNA-binding protein which mediates polarized mRNA (e.g. Ran2 transcripts mRNA) transport from the nucleus to the vicinity of the cell plate during cytokinesis and phragmoplast formation. The protein is Phragmoplastin interacting protein 1 of Arabidopsis thaliana (Mouse-ear cress).